A 490-amino-acid polypeptide reads, in one-letter code: Ketol-acid reductoisomerase (NADP(+)) (490 aa).

Residues 18 to 208 (AKCRFMDSSE…GGHKAGVLMS (191 aa)) form the KARI N-terminal Rossmann domain. NADP(+) contacts are provided by residues 45 to 48 (CGAQ), Arg-68, Arg-76, Ser-78, and 108 to 110 (DKQ). His-132 is an active-site residue. Gly-158 lines the NADP(+) pocket. 2 consecutive KARI C-terminal knotted domains span residues 209–344 (SFIA…KTPA) and 345–486 (GDVE…MADM). Residues Asp-217, Glu-221, Glu-389, and Glu-393 each contribute to the Mg(2+) site. Ser-414 provides a ligand contact to substrate.

This sequence belongs to the ketol-acid reductoisomerase family. It depends on Mg(2+) as a cofactor.

It catalyses the reaction (2R)-2,3-dihydroxy-3-methylbutanoate + NADP(+) = (2S)-2-acetolactate + NADPH + H(+). The enzyme catalyses (2R,3R)-2,3-dihydroxy-3-methylpentanoate + NADP(+) = (S)-2-ethyl-2-hydroxy-3-oxobutanoate + NADPH + H(+). It participates in amino-acid biosynthesis; L-isoleucine biosynthesis; L-isoleucine from 2-oxobutanoate: step 2/4. The protein operates within amino-acid biosynthesis; L-valine biosynthesis; L-valine from pyruvate: step 2/4. Functionally, involved in the biosynthesis of branched-chain amino acids (BCAA). Catalyzes an alkyl-migration followed by a ketol-acid reduction of (S)-2-acetolactate (S2AL) to yield (R)-2,3-dihydroxy-isovalerate. In the isomerase reaction, S2AL is rearranged via a Mg-dependent methyl migration to produce 3-hydroxy-3-methyl-2-ketobutyrate (HMKB). In the reductase reaction, this 2-ketoacid undergoes a metal-dependent reduction by NADPH to yield (R)-2,3-dihydroxy-isovalerate. This Marinomonas sp. (strain MWYL1) protein is Ketol-acid reductoisomerase (NADP(+)).